A 65-amino-acid polypeptide reads, in one-letter code: Large ribosomal subunit protein bL35 (65 aa).

This sequence belongs to the bacterial ribosomal protein bL35 family.

In Borrelia turicatae (strain 91E135), this protein is Large ribosomal subunit protein bL35.